We begin with the raw amino-acid sequence, 295 residues long: Small ribosomal subunit protein uS2 (295 aa).

Residues 264-295 form a disordered region; it reads KFSKTKNIDEETNTEFEQALNDTDENKNADNA.

This sequence belongs to the universal ribosomal protein uS2 family.

The protein is Small ribosomal subunit protein uS2 of Rickettsia akari (strain Hartford).